Reading from the N-terminus, the 1101-residue chain is Helicase POLQ-like (1101 aa).

Residues 212–261 (DLGDHSMKERDWKSSSHNTVNEELPHNCIEQPQQNDESSSKVRTSSDMNR) form a disordered region. Basic and acidic residues predominate over residues 213–225 (LGDHSMKERDWKS). Residues 241–258 (EQPQQNDESSSKVRTSSD) show a composition bias toward polar residues. The 173-residue stretch at 346–518 (LNSVQERKNL…FLQAEYYTSQ (173 aa)) folds into the Helicase ATP-binding domain. ATP is bound at residue 359–366 (LPTSGGKT). Positions 463-466 (DELH) match the DEAH box motif. The region spanning 566–758 (HLVALVTEVI…EFTKGIQTLF (193 aa)) is the Helicase C-terminal domain.

Belongs to the helicase family. SKI2 subfamily. As to quaternary structure, homodimer. Interacts with POLN. Interacts with RAD51B and RAD51C; promoting association with the BCDX2 complex. Interacts with the replication protein A (RPA/RP-A) complex. Interacts with RAD51; stimulating HELQ DNA helicase activity and ability to unwing DNA.

The protein resides in the nucleus. The protein localises to the chromosome. It carries out the reaction Couples ATP hydrolysis with the unwinding of duplex DNA by translocating in the 3'-5' direction.. The catalysed reaction is ATP + H2O = ADP + phosphate + H(+). ATPase activity is strongly stimulated by single-stranded DNA. Presence of ATP and Mg cofactor are required for helicase activity allowing to unwind duplex oligonucleotides up to 60-70-mer. This helicase activity is stimulated by replication protein A (RPA/RP-A) complex that binds to unwound regions and inhibits re-annealing. Single-stranded 3'-5' DNA helicase that plays a key role in homology-driven double-strand break (DSB) repair. Involved in different DSB repair mechanisms that are guided by annealing of extensive stretches of complementary bases at break ends, such as microhomology-mediated end-joining (MMEJ), single-strand annealing (SSA) or synthesis-dependent strand annealing (SDSA). Possesses both DNA unwinding and annealing activities. Forms a complex with RAD51, stimulating HELQ DNA helicase activity and ability to unwing DNA. Efficiently unwinds substrates containing 3' overhangs or a D-loop. In contrast, interaction with the replication protein A (RPA/RP-A) complex inhibits DNA unwinding by HELQ but strongly stimulates DNA strand annealing. Triggers displacement of RPA from single-stranded DNA to facilitate annealing of complementary sequences. This chain is Helicase POLQ-like, found in Homo sapiens (Human).